Consider the following 526-residue polypeptide: Delayed-rectifier potassium channel regulatory subunit KCNS1 (526 aa).

The Cytoplasmic segment spans residues 1 to 217 (MLMLLVRGTH…LTMENPGYSL (217 aa)). Residues 218 to 239 (PSKLFSCVSISVVLASIAAMCI) traverse the membrane as a helical segment. Topologically, residues 240-270 (HSLPEYQAREAAAAVAAVAAGRSPEGVRDDP) are extracellular. The chain crosses the membrane as a helical span at residues 271 to 293 (VLRRLEYFCIAWFSFEVSSRLLL). The Cytoplasmic segment spans residues 294 to 304 (APSTRNFFCHP). The helical transmembrane segment at 305–322 (LNLIDIVSVLPFYLTLLA) threads the bilayer. Residues 323 to 337 (GVALGDQGGKEFGHL) are Extracellular-facing. Residues 338-358 (GKVVQVFRLMRIFRVLKLARH) traverse the membrane as a helical; Voltage-sensor segment. The Cytoplasmic portion of the chain corresponds to 359–373 (STGLRSLGATLKHSY). Residues 374–395 (REVGILLLYLAVGVSVFSGVAY) form a helical membrane-spanning segment. Residues 396–408 (TAEKEEDVGFNTI) lie on the Extracellular side of the membrane. An intramembrane region (helical) is located at residues 409-420 (PACWWWGTVSMT). A Selectivity filter motif is present at residues 421 to 426 (TVGYGD). The stretch at 421 to 428 (TVGYGDVV) is an intramembrane region. At 429–435 (PVTVAGK) the chain is on the extracellular side. The helical transmembrane segment at 436-464 (LAASGCILGGILVVALPITIIFNKFSHFY) threads the bilayer. At 465–526 (RRQKALEAAV…PSEPPHPQMY (62 aa)) the chain is on the cytoplasmic side. Residues 491–526 (GVSEASLETSRETSQEGRSADLESQAPSEPPHPQMY) form a disordered region. The segment covering 499-511 (TSRETSQEGRSAD) has biased composition (basic and acidic residues).

This sequence belongs to the potassium channel family. S (TC 1.A.1.2) subfamily. Kv9.1/KCNS1 sub-subfamily. As to quaternary structure, heterotetramer with KCNB1. Heterotetramer with KCNB2. Does not form homomultimers.

The protein resides in the cell membrane. Functionally, potassium channel regulatory subunit that modulate the delayed rectifier voltage-gated potassium channel activity of KCNB1 and KCNB2 by altering their kinetics, expression levels, and shifting the half-inactivation potential to more polarized values. While it does not form functional channels on its own, it can form functional heterotetrameric channels with KCNB1 and KCNB2. Each regulatory subunit has unique regulatory properties that can lead to extensive inhibition, significant changes in kinetics, and/or substantial shifts in the voltage dependencies of the inactivation process. This chain is Delayed-rectifier potassium channel regulatory subunit KCNS1, found in Pan troglodytes (Chimpanzee).